The following is a 220-amino-acid chain: Superoxide dismutase [Fe] (220 aa).

Fe cation-binding residues include H26, H73, D164, and H168.

It belongs to the iron/manganese superoxide dismutase family. Homodimer. Fe cation is required as a cofactor.

The enzyme catalyses 2 superoxide + 2 H(+) = H2O2 + O2. Its function is as follows. Destroys superoxide anion radicals which are normally produced within the cells and which are toxic to biological systems. The protein is Superoxide dismutase [Fe] (sodB) of Campylobacter jejuni subsp. jejuni serotype O:2 (strain ATCC 700819 / NCTC 11168).